The chain runs to 318 residues: Malonyl-S-ACP:biotin-protein carboxyltransferase MADC (318 aa).

Residues 2 to 257 (AKWTELQDKS…VLQKPMEEIE (256 aa)) enclose the CoA carboxyltransferase N-terminal domain.

It localises to the cytoplasm. It carries out the reaction N(6)-biotinyl-L-lysyl-[protein] + malonyl-[ACP] = N(6)-carboxybiotinyl-L-lysyl-[protein] + acetyl-[ACP]. In terms of biological role, gamma subunit of the biotin-dependent malonate decarboxylase multienzyme complex (EC 7.2.4.4). The two subunits MADC and MADD are required for the transfer of the malonate carboxy group from the acyl-carrier protein (ACP) to the prosthetic group of the biotin carrier MADF. Required for the regeneration of ACP. This Malonomonas rubra protein is Malonyl-S-ACP:biotin-protein carboxyltransferase MADC (madC).